The sequence spans 323 residues: tRNA uridine(34) hydroxylase (323 aa).

In terms of domain architecture, Rhodanese spans 123 to 217 (SDPDVVVIDT…YLETIPEEES (95 aa)). The active-site Cysteine persulfide intermediate is Cys177.

Belongs to the TrhO family.

The enzyme catalyses uridine(34) in tRNA + AH2 + O2 = 5-hydroxyuridine(34) in tRNA + A + H2O. Its function is as follows. Catalyzes oxygen-dependent 5-hydroxyuridine (ho5U) modification at position 34 in tRNAs. This chain is tRNA uridine(34) hydroxylase, found in Methylobacillus flagellatus (strain ATCC 51484 / DSM 6875 / VKM B-1610 / KT).